The primary structure comprises 609 residues: Nuclear factor 7, brain (609 aa).

A Tudor-knot domain is found at 21–75; it reads NVGSTYPCKRSDGSQHDAEIVKVRYNKQAGREEYYAHYVGLNRRQNEWVDKSRLV. Basic and acidic residues predominate over residues 74–84; that stretch reads LVLTKPPKEGE. Residues 74–129 form a disordered region; the sequence is LVLTKPPKEGETNGTDQEVTDTAEQPDSKTPQKRKIEEPEPEPKKAKVEEKDASKN. A compositionally biased stretch (polar residues) spans 85-102; the sequence is TNGTDQEVTDTAEQPDSK. A Phosphothreonine; by CDK1 modification is found at T103. The span at 107-127 shows a compositional bias: basic and acidic residues; sequence RKIEEPEPEPKKAKVEEKDAS. An RING-type zinc finger spans residues 145 to 185; that stretch reads CPLCVELFKDPVMVACGHNFCRSCIDKAWEGQSSFACPECR. The segment at 219–260 adopts a B box-type zinc-finger fold; sequence RPLEKCSEHDERLKLYCKDDGTLSCVICRDSLKHASHNFLPI. 4 residues coordinate Zn(2+): C224, H227, C246, and H252. Residues 278 to 371 adopt a coiled-coil conformation; it reads LEASLKVTEQ…SLAKERMEDT (94 aa). The B30.2/SPRY domain occupies 413–609; that stretch reads GPIQYIMWKE…VDPLRFVHNK (197 aa).

As to quaternary structure, monomer. Threonine (predominantly) and serine residues are phosphorylated during oocyte maturation, when CDK1 is active. At the neurula stage, high expression in dorsal embryo region including neural folds and somites. Also high expression in adult brain (CNS) and low expression in oocytes.

It is found in the nucleus. Its function is as follows. Transcription factor that determines dorsal-ventral body axis. This is Nuclear factor 7, brain from Xenopus laevis (African clawed frog).